The following is a 424-amino-acid chain: uncharacterized protein (424 aa).

The protein belongs to the serpin family.

This is an uncharacterized protein from Methanosarcina acetivorans (strain ATCC 35395 / DSM 2834 / JCM 12185 / C2A).